Reading from the N-terminus, the 1530-residue chain is Coiled-coil domain-containing protein 141 (1530 aa).

A Spectrin repeat occupies Asn49–Leu127. Position 91 is a phosphothreonine (Thr91). 3 coiled-coil regions span residues Ile220–Leu251, Leu758–Ile785, and Ala865–Lys967. Disordered stretches follow at residues Ser1153 to Ser1240, Leu1259 to Thr1285, Pro1324 to Thr1356, and Ser1369 to Ser1403. A compositionally biased stretch (polar residues) spans Pro1334–Thr1345. In terms of domain architecture, Ig-like spans Pro1409 to His1497.

Interacts with DISC1. Interacts preferentially with phosphorylated forms of myosin regulatory light chain (MRLC). Interacts (via the N-terminal region) with HDAC6; inhibits the deacetylase activity of HDAC6. Interacts with KIBRA (via the C-terminal region); retains AMPAR in the cytosol after internalization. Post-translationally, ubiquitinated and degradated by the CDC20-APC/C pathway. During brain development, CDC20-APC/C complex degrades CCDC141 after centrosome translocation into the dilated area. CCDC141 is restabilized in the dilation until the centrosome enters the dilation, at which point it is once again immediately destabilized by CDC20-APC/C complex. The oscillatory regulation of CCDC141 protein is needed for proper cortical migration. In terms of processing, phosphorylation at Thr-91 by PLK1 affects CCDC141 degradation.

It localises to the cytoplasm. The protein resides in the cytoskeleton. It is found in the microtubule organizing center. Its subcellular location is the centrosome. Functionally, plays a critical role in cortical radial and GnRH neurons migration during brain development. Regulates cortical radial migration by negatively controlling the activity of histone deacetylase 6 (HDAC6) and promotes centrosome maturation. CAMDI is required for dilation formation of cortical neurons during radial migration. Plays a critical role in learning and memory performance through regulation of AMPA-selective glutamate receptors (AMPARs) cell surface expression in competition with KIBRA. The sequence is that of Coiled-coil domain-containing protein 141 from Rattus norvegicus (Rat).